The primary structure comprises 23 residues: U1-poneritoxin-Da3b (23 aa).

Belongs to the non-disulfide-bridged peptide (NDBP) superfamily. Medium-length antimicrobial peptide (group 3) family. Ponericin-W subfamily. Expressed by the venom gland.

Its subcellular location is the secreted. The protein resides in the target cell membrane. In terms of biological role, may have antimicrobial properties, like most ant linear peptides. May act by disrupting the integrity of the bacterial cell membrane. This is U1-poneritoxin-Da3b from Dinoponera australis (Giant neotropical hunting ant).